We begin with the raw amino-acid sequence, 528 residues long: U6 snRNA (guanine-N(2))-methyltransferase THUMPD2 (528 aa).

The segment covering Gln154–Leu168 has biased composition (basic and acidic residues). 2 disordered regions span residues Gln154–Gln200 and Met437–Ser460. The THUMP domain occupies Glu162–Leu266.

It belongs to the methyltransferase superfamily. As to quaternary structure, part of the heterodimeric THUMPD2-TRM112 methyltransferase complex; this complex forms an active tRNA methyltransferase, where TRMT112 acts as an activator of the catalytic subunit THUMPD2.

It is found in the nucleus. It carries out the reaction guanosine in U6 snRNA + S-adenosyl-L-methionine = N(2)-methylguanosine in U6 snRNA + S-adenosyl-L-homocysteine + H(+). Catalytic subunit of the THUMPD2-TRM112 methyltransferase complex, that specifically mediates the S-adenosyl-L-methionine-dependent N(2)-methylation of guanosine nucleotides, most probably at position 72 (m2G72), in the U6snRNA of the major spliceosome. This modification in the U6 snRNA affects the constitutive splicing efficiency of introns that have suboptimal splice sites and can impact final mRNA levels. The chain is U6 snRNA (guanine-N(2))-methyltransferase THUMPD2 from Mus musculus (Mouse).